The following is a 111-amino-acid chain: Phosphoribosyl-ATP pyrophosphatase (111 aa).

It belongs to the PRA-PH family.

The protein localises to the cytoplasm. It catalyses the reaction 1-(5-phospho-beta-D-ribosyl)-ATP + H2O = 1-(5-phospho-beta-D-ribosyl)-5'-AMP + diphosphate + H(+). Its pathway is amino-acid biosynthesis; L-histidine biosynthesis; L-histidine from 5-phospho-alpha-D-ribose 1-diphosphate: step 2/9. The polypeptide is Phosphoribosyl-ATP pyrophosphatase (Alcanivorax borkumensis (strain ATCC 700651 / DSM 11573 / NCIMB 13689 / SK2)).